The sequence spans 996 residues: Sodium/potassium-transporting ATPase subunit alpha-A (996 aa).

A run of 2 helical transmembrane segments spans residues 73-93 (LFGG…IAYT) and 107-123 (LYLG…TGCF). The segment at 191–211 (DNSSLTGESEPQSRSTECTND) is disordered. The next 2 helical transmembrane spans lie at 268-290 (FIHI…SFLY) and 297-325 (AAIF…TLTA). D353 acts as the 4-aspartylphosphate intermediate in catalysis. Residue K483 participates in ATP binding. 2 residues coordinate Mg(2+): D692 and D696. 4 consecutive transmembrane segments (helical) span residues 762 to 785 (LSPF…ILCI), 820 to 847 (ERLI…VIMG), 889 to 909 (YTCH…DLII), and 926 to 951 (TLNF…DKGL).

Belongs to the cation transport ATPase (P-type) (TC 3.A.3) family. Type IIC subfamily. As to quaternary structure, the sodium/potassium-transporting ATPase is composed of a catalytic alpha subunit, an auxiliary non-catalytic beta subunit and an additional regulatory subunit.

The protein localises to the cell membrane. It carries out the reaction K(+)(out) + Na(+)(in) + ATP + H2O = K(+)(in) + Na(+)(out) + ADP + phosphate + H(+). Its function is as follows. This is the catalytic component of the active enzyme, which catalyzes the hydrolysis of ATP coupled with the exchange of sodium and potassium ions across the plasma membrane. This action creates the electrochemical gradient of sodium and potassium ions, providing the energy for active transport of various nutrients. The sequence is that of Sodium/potassium-transporting ATPase subunit alpha-A from Artemia franciscana (Brine shrimp).